The chain runs to 476 residues: Cysteine--tRNA ligase (476 aa).

A Zn(2+)-binding site is contributed by Cys-28. The 'HIGH' region motif lies at 30–40 (VTTYDFCHIGH). Residues Cys-215, His-241, and Glu-245 each contribute to the Zn(2+) site. The short motif at 273–277 (KMSKS) is the 'KMSKS' region element. Lys-276 is a binding site for ATP.

The protein belongs to the class-I aminoacyl-tRNA synthetase family. Monomer. It depends on Zn(2+) as a cofactor.

The protein localises to the cytoplasm. It carries out the reaction tRNA(Cys) + L-cysteine + ATP = L-cysteinyl-tRNA(Cys) + AMP + diphosphate. This is Cysteine--tRNA ligase from Buchnera aphidicola subsp. Cinara cedri (strain Cc).